Here is a 173-residue protein sequence, read N- to C-terminus: Ribosome maturation factor RimM (173 aa).

Residues 95-169 (EGSYYFKDIL…RIEVTLLEGL (75 aa)) form the PRC barrel domain.

This sequence belongs to the RimM family. In terms of assembly, binds ribosomal protein uS19.

Its subcellular location is the cytoplasm. An accessory protein needed during the final step in the assembly of 30S ribosomal subunit, possibly for assembly of the head region. Essential for efficient processing of 16S rRNA. May be needed both before and after RbfA during the maturation of 16S rRNA. It has affinity for free ribosomal 30S subunits but not for 70S ribosomes. This is Ribosome maturation factor RimM from Lactobacillus gasseri (strain ATCC 33323 / DSM 20243 / BCRC 14619 / CIP 102991 / JCM 1131 / KCTC 3163 / NCIMB 11718 / NCTC 13722 / AM63).